Reading from the N-terminus, the 557-residue chain is Dihydroxy-acid dehydratase (557 aa).

A Mg(2+)-binding site is contributed by Asp78. Position 119 (Cys119) interacts with [2Fe-2S] cluster. Mg(2+) is bound by residues Asp120 and Lys121. Lys121 is subject to N6-carboxylysine. [2Fe-2S] cluster is bound at residue Cys192. Glu442 provides a ligand contact to Mg(2+). The active-site Proton acceptor is the Ser468.

It belongs to the IlvD/Edd family. Homodimer. Requires [2Fe-2S] cluster as cofactor. It depends on Mg(2+) as a cofactor.

The enzyme catalyses (2R)-2,3-dihydroxy-3-methylbutanoate = 3-methyl-2-oxobutanoate + H2O. It carries out the reaction (2R,3R)-2,3-dihydroxy-3-methylpentanoate = (S)-3-methyl-2-oxopentanoate + H2O. The protein operates within amino-acid biosynthesis; L-isoleucine biosynthesis; L-isoleucine from 2-oxobutanoate: step 3/4. Its pathway is amino-acid biosynthesis; L-valine biosynthesis; L-valine from pyruvate: step 3/4. In terms of biological role, functions in the biosynthesis of branched-chain amino acids. Catalyzes the dehydration of (2R,3R)-2,3-dihydroxy-3-methylpentanoate (2,3-dihydroxy-3-methylvalerate) into 2-oxo-3-methylpentanoate (2-oxo-3-methylvalerate) and of (2R)-2,3-dihydroxy-3-methylbutanoate (2,3-dihydroxyisovalerate) into 2-oxo-3-methylbutanoate (2-oxoisovalerate), the penultimate precursor to L-isoleucine and L-valine, respectively. The protein is Dihydroxy-acid dehydratase of Bacillus cereus (strain Q1).